A 413-amino-acid chain; its full sequence is UPF0754 membrane protein PCC7424_0748 (413 aa).

Transmembrane regions (helical) follow at residues 3-23 (IALELSTIWTIALPPITGAII) and 391-411 (IVNLGGILGFFVGTIQTVILL).

It belongs to the UPF0754 family.

The protein resides in the cell inner membrane. The sequence is that of UPF0754 membrane protein PCC7424_0748 from Gloeothece citriformis (strain PCC 7424) (Cyanothece sp. (strain PCC 7424)).